We begin with the raw amino-acid sequence, 476 residues long: Eukaryotic translation initiation factor 3 subunit L (476 aa).

A PCI domain is found at 257–452 (DAIRMFSHIL…DLDYALENDL (196 aa)).

Belongs to the eIF-3 subunit L family. Component of the eukaryotic translation initiation factor 3 (eIF-3) complex.

Its subcellular location is the cytoplasm. In terms of biological role, component of the eukaryotic translation initiation factor 3 (eIF-3) complex, which is involved in protein synthesis of a specialized repertoire of mRNAs and, together with other initiation factors, stimulates binding of mRNA and methionyl-tRNAi to the 40S ribosome. The eIF-3 complex specifically targets and initiates translation of a subset of mRNAs involved in cell proliferation. In Aspergillus clavatus (strain ATCC 1007 / CBS 513.65 / DSM 816 / NCTC 3887 / NRRL 1 / QM 1276 / 107), this protein is Eukaryotic translation initiation factor 3 subunit L.